We begin with the raw amino-acid sequence, 90 residues long: Small ribosomal subunit protein bS20 (90 aa).

This sequence belongs to the bacterial ribosomal protein bS20 family.

In terms of biological role, binds directly to 16S ribosomal RNA. The polypeptide is Small ribosomal subunit protein bS20 (Rickettsia felis (strain ATCC VR-1525 / URRWXCal2) (Rickettsia azadi)).